Here is a 406-residue protein sequence, read N- to C-terminus: Cysteine desulfurase (406 aa).

N6-(pyridoxal phosphate)lysine is present on Lys226. Residue Cys364 is the Cysteine persulfide intermediate of the active site.

It belongs to the class-V pyridoxal-phosphate-dependent aminotransferase family. Csd subfamily. In terms of assembly, homodimer. Interacts with SufE and the SufBCD complex composed of SufB, SufC and SufD. The interaction with SufE is required to mediate the direct transfer of the sulfur atom from the S-sulfanylcysteine. It depends on pyridoxal 5'-phosphate as a cofactor.

The protein localises to the cytoplasm. The catalysed reaction is (sulfur carrier)-H + L-cysteine = (sulfur carrier)-SH + L-alanine. The enzyme catalyses L-selenocysteine + AH2 = hydrogenselenide + L-alanine + A + H(+). It functions in the pathway cofactor biosynthesis; iron-sulfur cluster biosynthesis. Its function is as follows. Cysteine desulfurases mobilize the sulfur from L-cysteine to yield L-alanine, an essential step in sulfur metabolism for biosynthesis of a variety of sulfur-containing biomolecules. Component of the suf operon, which is activated and required under specific conditions such as oxidative stress and iron limitation. Acts as a potent selenocysteine lyase in vitro, that mobilizes selenium from L-selenocysteine. Selenocysteine lyase activity is however unsure in vivo. In Salmonella choleraesuis (strain SC-B67), this protein is Cysteine desulfurase.